Consider the following 411-residue polypeptide: Serine hydroxymethyltransferase (411 aa).

Residues leucine 113 and 117-119 contribute to the (6S)-5,6,7,8-tetrahydrofolate site; that span reads GHL. Lysine 222 is subject to N6-(pyridoxal phosphate)lysine. (6S)-5,6,7,8-tetrahydrofolate-binding positions include glutamate 238 and 346 to 348; that span reads SPF.

This sequence belongs to the SHMT family. As to quaternary structure, homodimer. It depends on pyridoxal 5'-phosphate as a cofactor.

Its subcellular location is the cytoplasm. It catalyses the reaction (6R)-5,10-methylene-5,6,7,8-tetrahydrofolate + glycine + H2O = (6S)-5,6,7,8-tetrahydrofolate + L-serine. The protein operates within one-carbon metabolism; tetrahydrofolate interconversion. It functions in the pathway amino-acid biosynthesis; glycine biosynthesis; glycine from L-serine: step 1/1. Functionally, catalyzes the reversible interconversion of serine and glycine with tetrahydrofolate (THF) serving as the one-carbon carrier. This reaction serves as the major source of one-carbon groups required for the biosynthesis of purines, thymidylate, methionine, and other important biomolecules. Also exhibits THF-independent aldolase activity toward beta-hydroxyamino acids, producing glycine and aldehydes, via a retro-aldol mechanism. The sequence is that of Serine hydroxymethyltransferase from Prochlorococcus marinus (strain NATL1A).